A 615-amino-acid polypeptide reads, in one-letter code: DNA mismatch repair protein MutL (615 aa).

Residues 362–397 (HFAEPAVREPVAPRYSPAPASGSRPAASWPNAQPGY) form a disordered region. A compositionally biased stretch (low complexity) spans 373–391 (APRYSPAPASGSRPAASWP).

The protein belongs to the DNA mismatch repair MutL/HexB family.

Functionally, this protein is involved in the repair of mismatches in DNA. It is required for dam-dependent methyl-directed DNA mismatch repair. May act as a 'molecular matchmaker', a protein that promotes the formation of a stable complex between two or more DNA-binding proteins in an ATP-dependent manner without itself being part of a final effector complex. In Escherichia coli O6:H1 (strain CFT073 / ATCC 700928 / UPEC), this protein is DNA mismatch repair protein MutL.